The sequence spans 336 residues: P2Y purinoceptor 13 (336 aa).

Over 1–32 the chain is Extracellular; sequence MLGTVNTTGMQGFNKSERCPRDTRMTQLLFPV. N-linked (GlcNAc...) asparagine glycans are attached at residues asparagine 6 and asparagine 14. The chain crosses the membrane as a helical span at residues 33-53; sequence LYTVVFFTGVLLNTLALWVFI. Over 54-60 the chain is Cytoplasmic; that stretch reads HIPSNST. The helical transmembrane segment at 61–81 threads the bilayer; sequence FIIYLKNTLVADLIMTLMLPF. Over 82 to 100 the chain is Extracellular; it reads KILSDSRLAPWQLRGFVCT. Cysteine 99 and cysteine 176 are disulfide-bonded. A helical transmembrane segment spans residues 101-121; the sequence is FSSVVFYETMYVGIMMLGLIA. Topologically, residues 122–144 are cytoplasmic; sequence FDRFLKIVVPFRKTFVKKTAFAK. Residues 145–165 form a helical membrane-spanning segment; sequence IVSISIWLLMFLISLPNMILN. The Extracellular portion of the chain corresponds to 166 to 193; sequence KEATASTVKKCASLKSPLGLLWHQVVSH. A helical membrane pass occupies residues 194–214; the sequence is TCQFIFWTVFILMLLFYTVIA. Topologically, residues 215–237 are cytoplasmic; that stretch reads KKVYDSYRKFKSRDSKHKRLEAK. Residues 238–258 traverse the membrane as a helical segment; it reads VFIVMAVFFVCFAPFHFVRVP. At 259 to 281 the chain is on the extracellular side; sequence YTHSQTTNKTDCRLENQLFLAKE. N-linked (GlcNAc...) asparagine glycosylation is present at asparagine 266. The helical transmembrane segment at 282–302 threads the bilayer; sequence STLFLATTNICMDPLIYIILC. The Cytoplasmic portion of the chain corresponds to 303–336; sequence KKFTRKVPCMRWRTKTAASSDEHHSSQTDNITLS.

It belongs to the G-protein coupled receptor 1 family. In terms of tissue distribution, highest levels in spleen, liver brain and kidney. Lower but significant level are also detected in intestine, stomach, skeletal muscle, testis, heart and lung.

It localises to the cell membrane. Receptor for ADP. Coupled to G(i)-proteins. May play a role in hematopoiesis and the immune system. The polypeptide is P2Y purinoceptor 13 (P2ry13) (Rattus norvegicus (Rat)).